Here is a 993-residue protein sequence, read N- to C-terminus: NACHT, LRR and PYD domains-containing protein 14 (993 aa).

In terms of domain architecture, NACHT spans 81–403 (QTVVLQGAAG…FYLLRENLEE (323 aa)). Position 87–94 (87–94 (GAAGIGKT)) interacts with ATP. 9 LRR repeats span residues 636 to 657 (DLKE…LKCK), 660 to 680 (KLRV…QKLS), 688 to 708 (SLVF…KSLC), 717 to 738 (SLER…VLSS), 745 to 765 (RLTH…KLLS), 774 to 795 (TLQS…HLST), 802 to 822 (SLVH…KLLC), 831 to 852 (NLQE…DLAS), and 859 to 879 (NLWS…NILC).

This sequence belongs to the NLRP family. As to expression, detected in adult ovary and testis. Detected in oocytes and in germ cell elements in seminiferous tubules in adult testis (at protein level).

It localises to the cytoplasm. Its function is as follows. May be involved in inflammation and spermatogenesis. In Mus musculus (Mouse), this protein is NACHT, LRR and PYD domains-containing protein 14 (Nlrp14).